Consider the following 56-residue polypeptide: Large ribosomal subunit protein bL32 (56 aa).

The interval 1–40 (MAVQQNKKSRSKRGMRRSHDSLGTAQLSVDATSGELHRRH) is disordered. The segment covering 7–16 (KKSRSKRGMR) has biased composition (basic residues). Residues 21–31 (SLGTAQLSVDA) are compositionally biased toward polar residues.

Belongs to the bacterial ribosomal protein bL32 family.

In Shewanella halifaxensis (strain HAW-EB4), this protein is Large ribosomal subunit protein bL32.